Consider the following 358-residue polypeptide: Probable D-xylulose reductase A (358 aa).

Cys-47, His-72, and Glu-73 together coordinate Zn(2+). 182–187 is a binding site for NAD(+); sequence GAGPVG.

The protein belongs to the zinc-containing alcohol dehydrogenase family. Requires Zn(2+) as cofactor.

It carries out the reaction xylitol + NAD(+) = D-xylulose + NADH + H(+). It functions in the pathway carbohydrate degradation; L-arabinose degradation via L-arabinitol; D-xylulose 5-phosphate from L-arabinose (fungal route): step 4/5. In terms of biological role, xylitol dehydrogenase which catalyzes the conversion of xylitol to D-xylulose. Xylose is a major component of hemicelluloses such as xylan. Most fungi utilize D-xylose via three enzymatic reactions, xylose reductase (XR), xylitol dehydrogenase (XDH), and xylulokinase, to form xylulose 5-phosphate, which enters pentose phosphate pathway. This chain is Probable D-xylulose reductase A (xdhA), found in Aspergillus fumigatus (strain CBS 144.89 / FGSC A1163 / CEA10) (Neosartorya fumigata).